The primary structure comprises 310 residues: Phosphoribosylaminoimidazole-succinocarboxamide synthase (310 aa).

The protein belongs to the SAICAR synthetase family.

The enzyme catalyses 5-amino-1-(5-phospho-D-ribosyl)imidazole-4-carboxylate + L-aspartate + ATP = (2S)-2-[5-amino-1-(5-phospho-beta-D-ribosyl)imidazole-4-carboxamido]succinate + ADP + phosphate + 2 H(+). Its pathway is purine metabolism; IMP biosynthesis via de novo pathway; 5-amino-1-(5-phospho-D-ribosyl)imidazole-4-carboxamide from 5-amino-1-(5-phospho-D-ribosyl)imidazole-4-carboxylate: step 1/2. This is Phosphoribosylaminoimidazole-succinocarboxamide synthase from Xanthomonas campestris pv. campestris (strain B100).